Consider the following 329-residue polypeptide: Mitochondrial substrate carrier family protein Q (329 aa).

Solcar repeat units lie at residues 18–115 (VEAL…LKSI), 125–206 (LGTI…LRAL), and 216–310 (LGGL…VVIH). A run of 6 helical transmembrane segments spans residues 21–41 (LGHAISGGVAGMAAIALTYPF), 95–115 (LIGIGASSFVYYYWYTLLKSI), 131–151 (LAIAALAGCANVLTTLPIWVV), 175–195 (GFGGLYKGLIPALILVSNPSV), 221–241 (VFILGAIAKLIAGIVTYPYLL), and 298–318 (AFMFLVKDKVVIHAVAILFYL).

It belongs to the mitochondrial carrier (TC 2.A.29) family.

It is found in the peroxisome membrane. Its function is as follows. May have transport activity. The polypeptide is Mitochondrial substrate carrier family protein Q (mcfQ) (Dictyostelium discoideum (Social amoeba)).